The primary structure comprises 579 residues: ATP-dependent RNA helicase SUV3, mitochondrial (579 aa).

Residues 1–59 (MAVAAALLRRRALYSALASPSWLHDTSSCYICSISGTHSLVNHPNLRLQRGYHNSGKFD) constitute a mitochondrion transit peptide. One can recognise a Helicase ATP-binding domain in the interval 72 to 213 (NAREKKRNVF…QRILEPTGDV (142 aa)). An ATP-binding site is contributed by 85–92 (GPTNSGKT). Residues 214-388 (VTVQYYERLS…GLFPTFDVLS (175 aa)) enclose the Helicase C-terminal domain. N309 carries an N-linked (GlcNAc...) asparagine glycan.

Belongs to the helicase family. In terms of assembly, homodimer; in free form. Component of the mitochondrial degradosome (mtEXO) complex which is a heteropentamer containing 2 copies of SUPV3L1 and 3 copies of PNPT1. The cofactor is Mg(2+). It depends on Mn(2+) as a cofactor.

It is found in the nucleus. It localises to the mitochondrion matrix. The protein localises to the mitochondrion nucleoid. The enzyme catalyses ATP + H2O = ADP + phosphate + H(+). Its function is as follows. Major helicase player in mitochondrial RNA metabolism. Component of the mitochondrial degradosome (mtEXO) complex, that degrades 3' overhang double-stranded RNA with a 3'-to-5' directionality in an ATP-dependent manner. ATPase and ATP-dependent multisubstrate helicase, able to unwind double-stranded (ds) DNA and RNA, and RNA/DNA heteroduplexes in the 5'-to-3' direction. Plays a role in the RNA surveillance system in mitochondria; regulates the stability of mature mRNAs, the removal of aberrantly formed mRNAs and the rapid degradation of non coding processing intermediates. Confers salinity and drought stress tolerances by maintaining both photosynthesis and antioxidant machinery, probably via an increase in plant hormones levels such as gibberellic acid (GA(3)), the cytokinin zeatin (Z) and indole-3-acetic acid (IAA). In Oryza sativa subsp. japonica (Rice), this protein is ATP-dependent RNA helicase SUV3, mitochondrial.